We begin with the raw amino-acid sequence, 259 residues long: Factor V activator (259 aa).

The N-terminal stretch at 1-18 (MVLIRVLANLLVLQLSYA) is a signal peptide. A propeptide spanning residues 19–24 (QKSSEL) is cleaved from the precursor. In terms of domain architecture, Peptidase S1 spans 25-251 (VVGGDECDIN…YTDWIQSIIA (227 aa)). 6 disulfides stabilise this stretch: C31–C165, C52–C68, C100–C258, C144–C212, C176–C191, and C202–C227. Active-site charge relay system residues include H67 and D112. Residue S206 is the Charge relay system of the active site. An N-linked (GlcNAc...) asparagine glycan is attached at N253.

Belongs to the peptidase S1 family. Snake venom subfamily. Monomer. N-glycosylated. Contains 4.4% of hexoses, 4.4% of hexosamines and 3.1% of sialic acids. As to expression, expressed by the venom gland.

Its subcellular location is the secreted. The catalysed reaction is Fully activates human clotting factor V by a single cleavage at the 1545-Trp-Tyr-Leu-Arg-|-Ser-Asn-Asn-Gly-1552 bond. Cattle, but not rabbit, factor V is cleaved, and no other proteins of the clotting system are attacked. Esterase activity is observed on Bz-Arg-OEt and Tos-Arg-OMe, and amidase activity on Phe-pipecolyl-Arg-NHPhNO2.. With respect to regulation, inhibited by D-Phe-Pro-Arg-chloromethyl ketone (FPRCK) (98%), PMSF (93%), benzamidine (67%), and diisopropylfluorophosphate (DFP). Is not inhibited by BPTI, antithrombin and EDTA. In terms of biological role, venom serine protease that converts factor V (F5) to the active form Va in the presence of calcium ions and phospholipids. It cleaves the Arg(1545)-Ser(1546) linkage in the human factor V molecule. Has hydrolytic activities against BAEE (1.2 U/mg), TAME, and Pro-Phe-Arg-MCA (4.9 U/mg). Shows coagulant activity. This chain is Factor V activator, found in Macrovipera lebetinus (Levantine viper).